We begin with the raw amino-acid sequence, 515 residues long: MMRGEFGEASSLSRSPSSPLQTEPHPQSPKFYRNHYVFSGDHSSYNSSSRFCLRSPSDYSLSSYFSNGLCSSEDGSSQFASPPLDGLMTKYNFGGDDLGLCESFDLLNVGEEDKTHHQTQRSSFGNYEANGDGGFRYYSGFGVDQKDHQISNSWNLGMQSCNMNNYSVPVHGKSGVGALFDHQGISSNPNESLPKVSEFQGYVYFMAKDQHGCRFLQWIFEDGSALDALVIFSEVIPHVVELMMDPFGNYLMQKLLDVCNEEQRTQIILMVTSEPGQLIRISLNAYGTRVVQRLVESIKTRKQISLVKSALRPGFLNLIRDLNGNHVIQRCLQCLSTEDNEFIFEDATKFCIDIATHRHGCCVLQKCIAYSSGLQREKLVTEISRNSLFLAQDPYGNYAVQFVLELRDFSAIAAMLAQLKGHYVELSMQKFSSHMVERCLTHCPESRPQIVRELISVPHFDILIQDPYANFVIQAALAVTKGSLHATLVEVIRPHSILRNNPYCKRIFSRNLLKN.

Residues 1–33 (MMRGEFGEASSLSRSPSSPLQTEPHPQSPKFYR) form a disordered region. The transit peptide at 1–70 (MMRGEFGEAS…LSSYFSNGLC (70 aa)) directs the protein to the chloroplast. The span at 10-20 (SSLSRSPSSPL) shows a compositional bias: low complexity. The PUM-HD domain occupies 174–515 (SGVGALFDHQ…RIFSRNLLKN (342 aa)). Pumilio repeat units follow at residues 198-233 (EFQG…VIFS), 234-269 (EVIP…QIIL), 270-308 (MVTS…SLVK), 310-345 (ALRP…FIFE), 346-381 (DATK…KLVT), 382-417 (EISR…AMLA), 418-456 (QLKG…ELIS), and 457-490 (VPHF…TLVE).

The protein resides in the plastid. Its subcellular location is the chloroplast. It is found in the cytoplasm. Sequence-specific RNA-binding protein that regulates translation and mRNA stability by binding the 3'-UTR of target mRNAs. The polypeptide is Putative pumilio homolog 8, chloroplastic (APUM8) (Arabidopsis thaliana (Mouse-ear cress)).